The primary structure comprises 191 residues: ADP-ribosylation factor (191 aa).

Gly-2 is lipidated: N-myristoyl glycine. GTP is bound by residues 24–31 (GLDAAGKT), 67–71 (DVGGQ), and 128–131 (NKQD).

The protein belongs to the small GTPase superfamily. Arf family.

It localises to the golgi apparatus. Its function is as follows. GTP-binding protein involved in protein trafficking; may modulate vesicle budding and uncoating within the Golgi apparatus. The protein is ADP-ribosylation factor of Giardia intestinalis (Giardia lamblia).